Consider the following 222-residue polypeptide: Small ribosomal subunit protein uS3 (222 aa).

The KH type-2 domain maps to 39–108 (IRKFVKNKLS…NVLINIVEVK (70 aa)).

The protein belongs to the universal ribosomal protein uS3 family. As to quaternary structure, part of the 30S ribosomal subunit. Forms a tight complex with proteins S10 and S14.

Its function is as follows. Binds the lower part of the 30S subunit head. Binds mRNA in the 70S ribosome, positioning it for translation. The chain is Small ribosomal subunit protein uS3 from Clostridium acetobutylicum (strain ATCC 824 / DSM 792 / JCM 1419 / IAM 19013 / LMG 5710 / NBRC 13948 / NRRL B-527 / VKM B-1787 / 2291 / W).